The primary structure comprises 1044 residues: Outer dynein arm-docking complex subunit 2 (1044 aa).

Composition is skewed to basic and acidic residues over residues 317-338 (IKFS…EVAI) and 379-401 (SKDR…EKSR). Disordered stretches follow at residues 317–409 (IKFS…PGRA) and 423–446 (ISDS…ANAD). HEAT repeat units lie at residues 448–485 (PSEY…AQET), 487–527 (QLAI…NPQI), 530–568 (NIVD…FRRA), 627–665 (AIRK…EENY), and 668–706 (AIKA…DEET). ARM repeat units follow at residues 484-523 (ETCQ…EISH), 525-564 (PQIR…NVAK), 535-577 (GGLP…RHGG), 622-661 (YANK…ECAS), 663-702 (ENYR…QCAE), 746-785 (KENV…ECCQ), 828-867 (PESM…PCIQ), 871-910 (DAGE…NIAK), 912-951 (QENL…RCCM), 953-992 (GRNR…QLSE), and 1004-1031 (GAVK…ISNI). 5 HEAT repeats span residues 831–870 (MMII…QNAK), 874–914 (EMVR…DQEN), 916–955 (AVIT…WGRN), 958–996 (AFGE…DADN), and 999–1037 (TMHE…LALA).

Component of the outer dynein arm-docking complex along with ODAD1, ODAD3, ODAD4 and CLXN. Interacts with CFAP61. As to expression, expressed in trachea multiciliated cells.

Its subcellular location is the cytoplasm. It localises to the cytoskeleton. The protein localises to the cilium axoneme. The protein resides in the cilium basal body. Functionally, component of the outer dynein arm-docking complex (ODA-DC) that mediates outer dynein arms (ODA) binding onto the doublet microtubule. Involved in mediating assembly of both ODAs and their axonemal docking complex onto ciliary microtubules. This chain is Outer dynein arm-docking complex subunit 2 (ODAD2), found in Bos taurus (Bovine).